Reading from the N-terminus, the 471-residue chain is Ribulose bisphosphate carboxylase large chain (471 aa).

The substrate site is built by Asn-115 and Thr-165. Lys-167 acts as the Proton acceptor in catalysis. Lys-169 lines the substrate pocket. Residues Lys-193, Asp-195, and Glu-196 each coordinate Mg(2+). Position 193 is an N6-carboxylysine (Lys-193). His-286 acts as the Proton acceptor in catalysis. The substrate site is built by Arg-287, His-319, and Ser-371.

This sequence belongs to the RuBisCO large chain family. Type I subfamily. In terms of assembly, heterohexadecamer of 8 large chains and 8 small chains. The cofactor is Mg(2+).

Its subcellular location is the carboxysome. It carries out the reaction 2 (2R)-3-phosphoglycerate + 2 H(+) = D-ribulose 1,5-bisphosphate + CO2 + H2O. The catalysed reaction is D-ribulose 1,5-bisphosphate + O2 = 2-phosphoglycolate + (2R)-3-phosphoglycerate + 2 H(+). Its function is as follows. RuBisCO catalyzes two reactions: the carboxylation of D-ribulose 1,5-bisphosphate, the primary event in carbon dioxide fixation, as well as the oxidative fragmentation of the pentose substrate in the photorespiration process. Both reactions occur simultaneously and in competition at the same active site. This is Ribulose bisphosphate carboxylase large chain from Synechococcus sp. (strain RCC307).